We begin with the raw amino-acid sequence, 836 residues long: uncharacterized protein (836 aa).

3 disordered regions span residues 1–25 (MDSTKEEEDLNNNIDEISDGENEEE), 692–718 (DSRSPKTVGTHESNSYEFDGASNNNQR), and 789–836 (ESSG…GYAS). 2 stretches are compositionally biased toward polar residues: residues 789–799 (ESSGINVSNTR) and 825–836 (IDSSSAQNGYAS).

It localises to the nucleus. This is an uncharacterized protein from Schizosaccharomyces pombe (strain 972 / ATCC 24843) (Fission yeast).